We begin with the raw amino-acid sequence, 602 residues long: MATSSTPKYNSNSLENSVRRSPGDGINHEQNDEISRLPGETLITDKEVIYMCPFYGPVKGRIYVTNYKLYFKGEEMEPLITFAVPLGVIARIEKMGGASSRGENSYGLDITCKDMRNLRFALKQEVHSRKQIFEDLTKYAFPLSHGLLFFAFQNEEKFPENGWAVYDAMTEFRRQGLPNDQWRITFINRNYELCDTYPPLLVVPYSASEEDLKRVAAFRSRNRIPVLSWLHPENQSAIMRCSQPLVGMSGKRNKDDERYLDIIRETNGQTSKLTIYDARPNVNAVANKATGGGYENEDAYPNAELVFLDIHNIHVMRESLKKLKDIVYPNVEESHWLSSLESTHWLEHIKLVLTGAIQVADKVASGKSSVVVHCSDGWDRTAQLTSLAMLMLDSYYRTIVGFEVLVQKEWISFGHKFSSRIGHGDKNHADADRSPIFLQFIDCVWQMSKQFPTAFEFNEHFLITILDHLYSCRFGTFLYNCETIRDKEKVREKTPSLWSLISSEKSKYTNPFYTKELNRVLYPVASMRHLELWVNYYIRWNPRIRQQQPNPVEQRYMELLALRDDYVRRLEELQISNSPKINRSTTSPSSPSQMMPQVQTPF.

The segment covering 1–16 (MATSSTPKYNSNSLEN) has biased composition (polar residues). The segment at 1–33 (MATSSTPKYNSNSLENSVRRSPGDGINHEQNDE) is disordered. Over residues 17–33 (SVRRSPGDGINHEQNDE) the composition is skewed to basic and acidic residues. In terms of domain architecture, GRAM spans 28–96 (HEQNDEISRL…GVIARIEKMG (69 aa)). The Myotubularin phosphatase domain maps to 162–537 (GWAVYDAMTE…RHLELWVNYY (376 aa)). Residues Asn287, Asn312, and Ile313 each coordinate a 1,2-diacyl-sn-glycero-3-phospho-(1D-myo-inositol-3,5-bisphosphate). A 1,2-diacyl-sn-glycero-3-phospho-(1D-myo-inositol-3-phosphate)-binding residues include Asn287, Asn312, and Ile313. The active-site Phosphocysteine intermediate is the Cys374. Ser375, Asp376, Gly377, Trp378, Asp379, Arg380, Lys416, and Arg420 together coordinate a 1,2-diacyl-sn-glycero-3-phospho-(1D-myo-inositol-3,5-bisphosphate). A 1,2-diacyl-sn-glycero-3-phospho-(1D-myo-inositol-3-phosphate) contacts are provided by Ser375, Asp376, Gly377, Trp378, Asp379, and Arg380. Arg420 lines the a 1,2-diacyl-sn-glycero-3-phospho-(1D-myo-inositol-3-phosphate) pocket. Residues 577–602 (NSPKINRSTTSPSSPSQMMPQVQTPF) form a disordered region. A compositionally biased stretch (low complexity) spans 584 to 602 (STTSPSSPSQMMPQVQTPF).

The protein belongs to the protein-tyrosine phosphatase family. Non-receptor class myotubularin subfamily.

It is found in the cytoplasm. The protein localises to the cell membrane. The protein resides in the cell projection. It localises to the filopodium. Its subcellular location is the ruffle. It is found in the late endosome. The protein localises to the myofibril. The protein resides in the sarcomere. The catalysed reaction is a 1,2-diacyl-sn-glycero-3-phospho-(1D-myo-inositol-3-phosphate) + H2O = a 1,2-diacyl-sn-glycero-3-phospho-(1D-myo-inositol) + phosphate. It carries out the reaction a 1,2-diacyl-sn-glycero-3-phospho-(1D-myo-inositol-3,5-bisphosphate) + H2O = a 1,2-diacyl-sn-glycero-3-phospho-(1D-myo-inositol-5-phosphate) + phosphate. It catalyses the reaction 1,2-dioctanoyl-sn-glycero-3-phospho-(1-D-myo-inositol-3-phosphate) + H2O = 1,2-dioctanoyl-sn-glycero-3-phospho-(1D-myo-inositol) + phosphate. The enzyme catalyses 1,2-dioctanoyl-sn-glycero-3-phospho-(1D-myo-inositol-3,5-bisphosphate) + H2O = 1,2-dioctanoyl-sn-glycero-3-phospho-(1D-myo-inositol-5-phosphate) + phosphate. The catalysed reaction is 1,2-dihexadecanoyl-sn-glycero-3-phospho-(1D-myo-inositol-3,5-phosphate) + H2O = 1,2-dihexadecanoyl-sn-glycero-3-phospho-(1D-myo-inositol-5-phosphate) + phosphate. Functionally, lipid phosphatase which dephosphorylates phosphatidylinositol 3-monophosphate (PI3P) and phosphatidylinositol 3,5-bisphosphate (PI(3,5)P2). The protein is Myotubularin (mtm1) of Xenopus laevis (African clawed frog).